A 576-amino-acid chain; its full sequence is MDAFATSPTSALIKAVNCIAHVTPMAGEDSSENRRASNYKPSTWDYEFLQSLATSHNTVQEKHMKMAEKLKEEVKSMIKGQMEPVAKLELINIVQRLGLKYRFESEIKEELFSLYKDGTDAWWVDNLHATALRFRLLRENGIFVPQDVFETFKDKSGKFKSQLCKDVRGLLSLYEASYLGWEGEDLLDEAKKFSTTNLNNVKESISSNTLGRLVKHALNLPLHWSAARYEARWFIDEYEKEENVNPNLLKYAKLDFNIVQSIHQGELGNLARWWVETGLDKLSFVRNTLMQNFMWGCAMVFEPQYGKVRDAAVKQASLIAMVDDVYDVYGSLEELEIFTDIVDRWDITGIDKLPRNISMILLTMFNTANQIGYDLLRDRGFNGIPHIAQAWATLCKKYLKEAKWYHSGYKPTLEEYLENGLVSISFVLSLVTAYLQTETLENLTYESAAYVNSVPPLVRYSGLLNRLYNDLGTSSAEIARGDTLKSIQCYMTQTGATEEAAREHIKGLVHEAWKGMNKCLFEQTPFAEPFVGFNVNTVRGSQFFYQHGDGYAVTESWTKDLSLSVLIHPIPLNEED.

(2E,6E)-farnesyl diphosphate contacts are provided by Arg286, Asp323, Asp327, Arg466, and Asn469. Positions 323 and 327 each coordinate Mg(2+). Positions 323–327 match the DDXXD motif motif; it reads DDVYD. Residues Asn469, Thr473, and Glu477 each coordinate Mg(2+).

It belongs to the terpene synthase family. Tpsb subfamily. Mg(2+) is required as a cofactor. Mn(2+) serves as cofactor.

Produces almost exclusively beta-bisabolene and only traces of alpha-bisabolol from (2E,6E)-farnesyl diphosphate in fragrance biosynthesis. The polypeptide is Beta-bisabolene synthase (Santalum austrocaledonicum (Sandalwood)).